Here is a 310-residue protein sequence, read N- to C-terminus: Fructose-bisphosphate aldolase/6-deoxy-5-ketofructose 1-phosphate synthase (310 aa).

Substrate is bound by residues 48-49 (DQ), His53, Asp57, and Trp180. Tyr182 serves as the catalytic Proton donor. Substrate-binding positions include Arg184, 213–215 (KVN), 241–243 (AGG), and 270–271 (GR). Lys213 (schiff-base intermediate with dihydroxyacetone-P) is an active-site residue. Lys213 (schiff-base intermediate with substrate) is an active-site residue.

The protein belongs to the DeoC/FbaB aldolase family.

The catalysed reaction is beta-D-fructose 1,6-bisphosphate = D-glyceraldehyde 3-phosphate + dihydroxyacetone phosphate. The enzyme catalyses beta-D-fructose 1,6-bisphosphate + methylglyoxal = 1-deoxy-D-threo-hexo-2,5-diulose 6-phosphate + D-glyceraldehyde 3-phosphate. It carries out the reaction beta-D-fructose 1-phosphate + methylglyoxal = 1-deoxy-D-threo-hexo-2,5-diulose 6-phosphate + D-glyceraldehyde. The protein operates within aromatic compound metabolism. Catalyzes the transaldolization of either fructose-1-P or fructose-1,6-bisphosphate with methylglyoxal to produce 6-deoxy-5-ketofructose-1-phosphate (DKFP). Also catalyzes the reversible aldol condensation of dihydroxyacetone phosphate (DHAP or glycerone-phosphate) with glyceraldehyde 3-phosphate (G3P or GAP) to produce fructose 1,6-bisphosphate (FBP). The protein is Fructose-bisphosphate aldolase/6-deoxy-5-ketofructose 1-phosphate synthase of Methanocaldococcus jannaschii (strain ATCC 43067 / DSM 2661 / JAL-1 / JCM 10045 / NBRC 100440) (Methanococcus jannaschii).